We begin with the raw amino-acid sequence, 439 residues long: Omega-aminotransferase (439 aa).

112–113 (GS) contacts pyridoxal 5'-phosphate. An N6-(pyridoxal phosphate)lysine modification is found at K281. Pyridoxal 5'-phosphate is bound at residue T318.

It belongs to the class-III pyridoxal-phosphate-dependent aminotransferase family. Homotetramer. Requires pyridoxal 5'-phosphate as cofactor.

It carries out the reaction 3-oxopropanoate + L-alanine = beta-alanine + pyruvate. The catalysed reaction is 3-aminobutanoate + pyruvate = acetoacetate + L-alanine. It catalyses the reaction benzylamine + pyruvate = benzaldehyde + L-alanine. The enzyme catalyses (S)-1-phenylethylamine + pyruvate = acetophenone + L-alanine. It carries out the reaction 2-phenylethylamine + pyruvate = 2-phenylacetaldehyde + L-alanine. The catalysed reaction is 1-phenylpropylamine + pyruvate = 1-phenylpropan-1-one + L-alanine. It catalyses the reaction 3-phenylpropylamine + pyruvate = 3-phenylpropanal + L-alanine. Functionally, aminotransferase that can use beta-amino acids, aliphatic amines, or aromatic amines as amino donors, and pyruvate as amino acceptor. Shows high activity for short-chain beta-amino acids, with the highest activity for 3-aminobutanoate and beta-alanine in vitro. Displays higher activity toward aromatic amines than aliphatic amines. May be involved in beta-alanine biosynthesis and/or degradation. The sequence is that of Omega-aminotransferase from Caulobacter vibrioides (strain ATCC 19089 / CIP 103742 / CB 15) (Caulobacter crescentus).